We begin with the raw amino-acid sequence, 434 residues long: Methylenetetrahydrofolate--tRNA-(uracil-5-)-methyltransferase TrmFO (434 aa).

9–14 (GGGLAG) contributes to the FAD binding site.

This sequence belongs to the MnmG family. TrmFO subfamily. FAD is required as a cofactor.

The protein resides in the cytoplasm. The catalysed reaction is uridine(54) in tRNA + (6R)-5,10-methylene-5,6,7,8-tetrahydrofolate + NADH + H(+) = 5-methyluridine(54) in tRNA + (6S)-5,6,7,8-tetrahydrofolate + NAD(+). It carries out the reaction uridine(54) in tRNA + (6R)-5,10-methylene-5,6,7,8-tetrahydrofolate + NADPH + H(+) = 5-methyluridine(54) in tRNA + (6S)-5,6,7,8-tetrahydrofolate + NADP(+). Functionally, catalyzes the folate-dependent formation of 5-methyl-uridine at position 54 (M-5-U54) in all tRNAs. The chain is Methylenetetrahydrofolate--tRNA-(uracil-5-)-methyltransferase TrmFO from Geobacter sulfurreducens (strain ATCC 51573 / DSM 12127 / PCA).